The primary structure comprises 679 residues: Glycine--tRNA ligase beta subunit (679 aa).

The protein belongs to the class-II aminoacyl-tRNA synthetase family. Tetramer of two alpha and two beta subunits.

The protein localises to the cytoplasm. It catalyses the reaction tRNA(Gly) + glycine + ATP = glycyl-tRNA(Gly) + AMP + diphosphate. This chain is Glycine--tRNA ligase beta subunit, found in Streptococcus pyogenes serotype M49 (strain NZ131).